The following is a 257-amino-acid chain: MVRPTEAEVKKSLSRLPAARKRAGNRAHLATYRRLLKYSTLPDLWRFLSSRPQNPPLGHHRLFFEVTLGHRIADCVILVSGGHQPVCYVVELKTCLSHQLIPTNTVRTSQRAQGLCQLSDSIHYIAHSAPPGTEAWTITPLLIFKNQKTLKTVYSESPGAFPTPVHTTEGKLCAFLTARENADIRKVLSKVPKKPKMDRGGKILGPTPGKRAVYSQAHHGRNKKGRPWTAQPTRAKSRTKDKGTPAFPRAGPACSGP.

The segment at 193–257 (KKPKMDRGGK…PRAGPACSGP (65 aa)) is disordered.

It belongs to the herpesviridae UL24 family.

Its subcellular location is the virion. The protein resides in the host cytoplasm. It localises to the host nucleus. It is found in the host nucleolus. The protein localises to the host Golgi apparatus. May participate in nuclear egress of viral particles. Plays a role in the dispersal of several host nucleolar proteins including NCL/nucleolin and NPM1. Since deletion of host NCL/nucleolin negatively impact on nuclear egress, UL24 supposedly acts on this process through its effect on host nucleoli. Induces cell cycle arrest in host cells at the G2/M phase following by apoptosis. The mechanism involves the inhibition of host mitotic complex cyclin-B/CDK1. This chain is Protein UL24 homolog (ORF20), found in Homo sapiens (Human).